Here is a 227-residue protein sequence, read N- to C-terminus: MTQMLTWRDALAQEKTLPYFQETLAFVARERAAGMTVYPPAKDVFNAFRFTELNAVKVVILGQDPYHGPNQAHGLSFSVKPGVPAPPSLVNIYKELASDIPGFVIPNHGCLQSWAQQGVMLLNTVLTVEAGKAHSHASLGWETFTDKVIKVLNAQREGIVFLLWGSHAQKKGTIIDPKRHHVLKAPHPSPLSAHRGFLGCRHFSRANALLEQQGQQPIDWTPTLPAA.

Asp-64 acts as the Proton acceptor in catalysis.

This sequence belongs to the uracil-DNA glycosylase (UDG) superfamily. UNG family.

Its subcellular location is the cytoplasm. It carries out the reaction Hydrolyzes single-stranded DNA or mismatched double-stranded DNA and polynucleotides, releasing free uracil.. Excises uracil residues from the DNA which can arise as a result of misincorporation of dUMP residues by DNA polymerase or due to deamination of cytosine. The polypeptide is Uracil-DNA glycosylase (Sodalis glossinidius (strain morsitans)).